The following is a 362-amino-acid chain: Cobalt-precorrin-5B C(1)-methyltransferase (362 aa).

It belongs to the CbiD family.

The enzyme catalyses Co-precorrin-5B + S-adenosyl-L-methionine = Co-precorrin-6A + S-adenosyl-L-homocysteine. The protein operates within cofactor biosynthesis; adenosylcobalamin biosynthesis; cob(II)yrinate a,c-diamide from sirohydrochlorin (anaerobic route): step 6/10. Functionally, catalyzes the methylation of C-1 in cobalt-precorrin-5B to form cobalt-precorrin-6A. In Geotalea daltonii (strain DSM 22248 / JCM 15807 / FRC-32) (Geobacter daltonii), this protein is Cobalt-precorrin-5B C(1)-methyltransferase.